The primary structure comprises 159 residues: Superoxide dismutase [Cu-Zn] (159 aa).

Cu cation contacts are provided by His-47, His-49, and His-64. The cysteines at positions 58 and 150 are disulfide-linked. 4 residues coordinate Zn(2+): His-64, His-72, His-81, and Asp-84. Cu cation is bound at residue His-121.

Belongs to the Cu-Zn superoxide dismutase family. Requires Cu cation as cofactor. Zn(2+) serves as cofactor.

It localises to the cytoplasm. It carries out the reaction 2 superoxide + 2 H(+) = H2O2 + O2. Destroys radicals which are normally produced within the cells and which are toxic to biological systems. The polypeptide is Superoxide dismutase [Cu-Zn] (SOD) (Haemonchus contortus (Barber pole worm)).